The sequence spans 88 residues: Small ribosomal subunit protein uS15 (88 aa).

The protein belongs to the universal ribosomal protein uS15 family. Part of the 30S ribosomal subunit. Forms a bridge to the 50S subunit in the 70S ribosome, contacting the 23S rRNA.

Functionally, one of the primary rRNA binding proteins, it binds directly to 16S rRNA where it helps nucleate assembly of the platform of the 30S subunit by binding and bridging several RNA helices of the 16S rRNA. In terms of biological role, forms an intersubunit bridge (bridge B4) with the 23S rRNA of the 50S subunit in the ribosome. This is Small ribosomal subunit protein uS15 from Methylacidiphilum infernorum (isolate V4) (Methylokorus infernorum (strain V4)).